The primary structure comprises 123 residues: Large ribosomal subunit protein uL29 (123 aa).

The protein belongs to the universal ribosomal protein uL29 family.

The sequence is that of Large ribosomal subunit protein uL29 (rpl-35) from Caenorhabditis elegans.